The primary structure comprises 657 residues: SAGA complex subunit SGF73 (657 aa).

Zn(2+) is bound by residues Cys78, Cys81, His93, and Cys98. 4 disordered regions span residues Cys98–His225, Glu287–Thr353, Gln469–Thr532, and Glu572–Gly636. A compositionally biased stretch (basic and acidic residues) spans Thr107–Ile118. Over residues Asp131–Asn163 the composition is skewed to acidic residues. 2 stretches are compositionally biased toward polar residues: residues Ser174 to Met193 and Thr200 to Ile210. The 67-residue stretch at Asn220 to Ala286 folds into the SCA7 domain. The segment covering Gln306–Gln321 has biased composition (basic residues). Low complexity-rich tracts occupy residues Asn325–Ser336 and Gln469–Gln493. The span at Ala504–Lys516 shows a compositional bias: polar residues. The span at Gln517–Gln526 shows a compositional bias: low complexity. Residues Glu572–His583 show a composition bias toward polar residues. Low complexity predominate over residues Asn584–Asn594. The span at Ala600–Gly636 shows a compositional bias: polar residues.

The protein belongs to the ataxin-7 family. As to quaternary structure, component of the 1.8 MDa SAGA (Spt-Ada-Gcn5 acetyltransferase) complex, which is composed of 19 subunits TRA1, SPT7, TAF5, NGG1/ADA3, SGF73, SPT20/ADA5, SPT8, TAF12, TAF6, HFI1/ADA1, UBP8, GCN5, ADA2, SPT3, SGF29, TAF10, TAF9, SGF11 and SUS1. The SAGA complex is composed of 4 modules, namely the HAT (histone acetyltransferase) module (GCN5, ADA2, NGG1/ADA3 and SGF29), the DUB (deubiquitinating) module (UBP8, SGF11, SGF73 and SUS1), the core or TAF (TBP-associated factor) module (TAF5, TAF6, TAF9, TAF10 and TAF12), and the Tra1 or SPT (Suppressor of Ty) module (TRA1, HFI1/ADA1, SPT3, SPT7, SPT8 and SPT20/ADA5). The Tra1/SPT module binds activators, the core module recruits TBP (TATA-binding protein), the HAT module contains the histone H3 acetyltransferase GCN5, and the DUB module comprises the histone H2B deubiquitinase UBP8. Also identified in an altered form of SAGA, named SALSA (SAGA altered, Spt8 absent) or SLIK (SAGA-like) complex, which contains a C-terminal truncated form of SPT7 and is missing SPT8. However, it has been shown that the SAGA and SAGA-like SALSA/SLIK transcriptional coactivators are structurally and biochemically equivalent.

The protein resides in the nucleus. It is found in the cytoplasm. Component of the transcription coactivator SAGA complex. SAGA acts as a general cofactor required for essentially all RNA polymerase II transcription. At the promoters, SAGA is required for transcription pre-initiation complex (PIC) recruitment. It influences RNA polymerase II transcriptional activity through different activities such as TBP interaction (via core/TAF module) and promoter selectivity, interaction with transcription activators (via Tra1/SPT module), and chromatin modification through histone acetylation (via HAT module) and deubiquitination (via DUB module). SAGA preferentially acetylates histones H3 (to form H3K9ac, H3K14ac, H3K18ac and H3K23ac) and H2B and deubiquitinates histone H2B. SAGA interacts with DNA via upstream activating sequences (UASs). Also identified in a modified version of SAGA named SALSA or SLIK. The cleavage of SPT7 and the absence of the SPT8 subunit in SLIK neither drive any major conformational differences in its structure compared with SAGA, nor significantly affect HAT, DUB, or DNA-binding activities. SGF73 tethers the DUB module to the rest of the SAGA complex through its central domain and activates the ubiquitin hydrolase UBP8 by maintaining its catalytic domain in an active conformation. SGF73 mediates recruitment of the TREX-2 mRNA export factors SAC3 and THP1 to SAGA, which is crucial to target TREX-2 to the nuclear pore complex (NPC) necessary for export of mRNA. Upon environmental stress, involved in the bypass of the canonical mRNA export process for the immediate export of stress-related transcripts to maintain proteostasis. The protein is SAGA complex subunit SGF73 (SGF73) of Saccharomyces cerevisiae (strain ATCC 204508 / S288c) (Baker's yeast).